A 636-amino-acid polypeptide reads, in one-letter code: Chaperone protein DnaK (636 aa).

Position 198 is a phosphothreonine; by autocatalysis (T198). The tract at residues 598–636 (YAAKEQPGEHGETGSGEQARKESGKDENVVDADFEEVKK) is disordered. The segment covering 603–625 (QPGEHGETGSGEQARKESGKDEN) has biased composition (basic and acidic residues). Positions 626-636 (VVDADFEEVKK) are enriched in acidic residues.

This sequence belongs to the heat shock protein 70 family.

Functionally, acts as a chaperone. This is Chaperone protein DnaK from Pelobacter propionicus (strain DSM 2379 / NBRC 103807 / OttBd1).